We begin with the raw amino-acid sequence, 186 residues long: ATP synthase subunit delta (186 aa).

Belongs to the ATPase delta chain family. As to quaternary structure, F-type ATPases have 2 components, F(1) - the catalytic core - and F(0) - the membrane proton channel. F(1) has five subunits: alpha(3), beta(3), gamma(1), delta(1), epsilon(1). F(0) has three main subunits: a(1), b(2) and c(10-14). The alpha and beta chains form an alternating ring which encloses part of the gamma chain. F(1) is attached to F(0) by a central stalk formed by the gamma and epsilon chains, while a peripheral stalk is formed by the delta and b chains.

Its subcellular location is the cell inner membrane. Functionally, f(1)F(0) ATP synthase produces ATP from ADP in the presence of a proton or sodium gradient. F-type ATPases consist of two structural domains, F(1) containing the extramembraneous catalytic core and F(0) containing the membrane proton channel, linked together by a central stalk and a peripheral stalk. During catalysis, ATP synthesis in the catalytic domain of F(1) is coupled via a rotary mechanism of the central stalk subunits to proton translocation. In terms of biological role, this protein is part of the stalk that links CF(0) to CF(1). It either transmits conformational changes from CF(0) to CF(1) or is implicated in proton conduction. The protein is ATP synthase subunit delta of Nitrobacter winogradskyi (strain ATCC 25391 / DSM 10237 / CIP 104748 / NCIMB 11846 / Nb-255).